Reading from the N-terminus, the 208-residue chain is Large ribosomal subunit protein uL3 (208 aa).

The tract at residues 123–147 (RHGQSRGPMAHGSRYHRRPGSMGPV) is disordered.

Belongs to the universal ribosomal protein uL3 family. In terms of assembly, part of the 50S ribosomal subunit. Forms a cluster with proteins L14 and L19.

In terms of biological role, one of the primary rRNA binding proteins, it binds directly near the 3'-end of the 23S rRNA, where it nucleates assembly of the 50S subunit. This chain is Large ribosomal subunit protein uL3, found in Streptococcus gordonii (strain Challis / ATCC 35105 / BCRC 15272 / CH1 / DL1 / V288).